The chain runs to 648 residues: Forkhead box protein N1 (648 aa).

The tract at residues 1-95 (MVSLLPPQSD…PGPGSFRLSP (95 aa)) is disordered. Residues 38–50 (APQNKHANFSCSS) show a composition bias toward polar residues. Residues 54–67 (DGPPERTPSLPPHS) are compositionally biased toward pro residues. Residues 271–367 (KPIYSYSILI…EELQKWKRKD (97 aa)) constitute a DNA-binding region (fork-head). Disordered stretches follow at residues 392-432 (LGSP…APGP), 457-521 (HLSP…TLLP), and 629-648 (SAAA…LALA). Positions 398 to 412 (GCPPPGLAGPGPIRP) are enriched in pro residues.

As to expression, bone marrow (at protein level). Expressed in thymus and skin.

It is found in the nucleus. Functionally, transcriptional regulator which regulates the development, differentiation, and function of thymic epithelial cells (TECs) both in the prenatal and postnatal thymus. Acts as a master regulator of the TECs lineage development and is required from the onset of differentiation in progenitor TECs in the developing fetus to the final differentiation steps through which TECs mature to acquire their full functionality. Regulates, either directly or indirectly the expression of a variety of genes that mediate diverse aspects of thymus development and function, including MHC Class II, DLL4, CCL25, CTSL, CD40 and PAX1. Regulates the differentiation of the immature TECs into functional cortical TECs (cTECs) and medullary TECs (mTECs). Essential for maintenance of mTECs population in the postnatal thymus. Involved in the morphogenesis and maintenance of the three-dimensional thymic microstructure which is necessary for a fully functional thymus. Plays an important role in the maintenance of hematopoiesis and particularly T lineage progenitors within the bone marrow niche with age. Essential for the vascularization of the thymus anlage. Promotes the terminal differentiation of epithelial cells in the epidermis and hair follicles, partly by negatively regulating the activity of protein kinase C. The chain is Forkhead box protein N1 (Foxn1) from Mus musculus (Mouse).